The primary structure comprises 411 residues: Lissencephaly-1 homolog (411 aa).

The 33-residue stretch at 7–39 (QREELNKAIADYLASNGFMEALESFKKETDMPG) folds into the LisH domain. Residues 54–80 (TSVIRLQKKVMDLEGRLAEAEKEYISG) are a coiled coil. Residues 77-89 (YISGTPSREKRSP) are compositionally biased toward basic and acidic residues. The interval 77–96 (YISGTPSREKRSPTEWIPRP) is disordered. WD repeat units follow at residues 104–145 (GHRA…RTIK), 146–187 (GHTD…RTMH), 188–227 (GHDH…CVRT), 230–269 (GHRD…CKLE), 272–334 (EHDH…ALFT), 337–376 (GHDN…CCKT), and 379–411 (AHSH…WECR).

It belongs to the WD repeat LIS1/nudF family.

The protein localises to the cytoplasm. Its subcellular location is the cytoskeleton. It localises to the microtubule organizing center. The protein resides in the centrosome. Its function is as follows. Positively regulates the activity of the minus-end directed microtubule motor protein dynein. May enhance dynein-mediated microtubule sliding by targeting dynein to the microtubule plus end. Required for several dynein- and microtubule-dependent processes. The protein is Lissencephaly-1 homolog of Ixodes scapularis (Black-legged tick).